The primary structure comprises 2543 residues: Highly reducing polyketide synthase PKS2 (2543 aa).

The Ketosynthase family 3 (KS3) domain maps to E4–G425. Catalysis depends on for beta-ketoacyl synthase activity residues C174, H309, and H349. Residues V573–T902 are malonyl-CoA:ACP transacylase (MAT) domain. S662 serves as the catalytic For malonyltransferase activity. The N-terminal hotdog fold stretch occupies residues H969–M1101. The PKS/mFAS DH domain occupies H969 to V1281. The segment at H969–D1283 is dehydratase (DH) domain. H1001 (proton acceptor; for dehydratase activity) is an active-site residue. A C-terminal hotdog fold region spans residues T1119–V1281. The Proton donor; for dehydratase activity role is filled by D1188. The interval S1438 to P1631 is methyltransferase (CMet) domain. Positions G1847–I2159 are enoylreductase (ER) domain. Positions A2184 to V2359 are ketoreductase (KR) domain. The region spanning D2463 to R2540 is the Carrier domain. S2500 is modified (O-(pantetheine 4'-phosphoryl)serine).

Its pathway is secondary metabolite biosynthesis. In terms of biological role, highly reducing polyketide synthase; part of the gene cluster that mediates the biosynthesis of phomenoic acid, a long chain aliphatic carboxylic acid that does not appear to be essential for pathogenicity but may play a role in allowing to outcompete other fungi in the environmental niche via its antifungal properties. The polyketide synthase produces the long methylated aliphatic carboxylic acid chain of phomenoic acid. The cluster-specific cytochrome P450 monooxygenase may then hydroxylate the methyl group of carbon 31. The putative dehydrogenase YogA, which has no obvious role in phomenoic acid biosynthesis, may further modify phomenoic acid to produce a compound not identified yet. This is Highly reducing polyketide synthase PKS2 from Leptosphaeria maculans (strain JN3 / isolate v23.1.3 / race Av1-4-5-6-7-8) (Blackleg fungus).